The following is a 186-amino-acid chain: MISTTDFKEGLIFENENGEIVEIVDYQHHRKSQARAVVRVKLRKLGSGSYVETSYRPEDKFKEVSVEKRPFMYLYSEGDMAHFMNNESYDQVAVPLDKLENQRKYLIENMECTGLYINDQLFDIVLPIKVVLTIKSTVPGVKGDTVSNLTKEAELETGVTIKVPLFINEGDKVIMDTRYCTYVERA.

This sequence belongs to the elongation factor P family.

The protein resides in the cytoplasm. The protein operates within protein biosynthesis; polypeptide chain elongation. In terms of biological role, involved in peptide bond synthesis. Stimulates efficient translation and peptide-bond synthesis on native or reconstituted 70S ribosomes in vitro. Probably functions indirectly by altering the affinity of the ribosome for aminoacyl-tRNA, thus increasing their reactivity as acceptors for peptidyl transferase. The chain is Elongation factor P from Elusimicrobium minutum (strain Pei191).